The sequence spans 417 residues: Serine hydroxymethyltransferase 4 (417 aa).

(6S)-5,6,7,8-tetrahydrofolate-binding positions include Leu121 and 125–127 (GHL). Lys230 bears the N6-(pyridoxal phosphate)lysine mark. A (6S)-5,6,7,8-tetrahydrofolate-binding site is contributed by 355-357 (SPF).

The protein belongs to the SHMT family. Homodimer. The cofactor is pyridoxal 5'-phosphate.

It localises to the cytoplasm. The enzyme catalyses (6R)-5,10-methylene-5,6,7,8-tetrahydrofolate + glycine + H2O = (6S)-5,6,7,8-tetrahydrofolate + L-serine. It functions in the pathway one-carbon metabolism; tetrahydrofolate interconversion. Its pathway is amino-acid biosynthesis; glycine biosynthesis; glycine from L-serine: step 1/1. Its function is as follows. Catalyzes the reversible interconversion of serine and glycine with tetrahydrofolate (THF) serving as the one-carbon carrier. This reaction serves as the major source of one-carbon groups required for the biosynthesis of purines, thymidylate, methionine, and other important biomolecules. Also exhibits THF-independent aldolase activity toward beta-hydroxyamino acids, producing glycine and aldehydes, via a retro-aldol mechanism. This chain is Serine hydroxymethyltransferase 4, found in Colwellia psychrerythraea (strain 34H / ATCC BAA-681) (Vibrio psychroerythus).